The chain runs to 384 residues: MSSVPAPREYFLDSIRAWLMLLGIPFHISLIYSTHSWHVNSAAPSWWLTLFNDFIHAFRMQVFFVISGYFSYMLFLRYPLKHWWKVRVERVGIPMLTAIPLLTLPQFILLQYVKEKTENWPTLSAYEKYNTLAWELISHLWFLLVLVILTTVSIGIFTWFQKRQETSKPRPAAISLAKLSLIFFLLGVAYAAIRRIIFIVYPAILSDGMFNFIVMQTLFYVPFFILGALAFIHPDLKARFTTPSRGCTLGAAVAFIAYLLNQRYGSGDAWMYETESVITMVMGLWMVNVVFSLGHRLLNFQSARVTYFVNASLFIYLVHHPLTLFFGAYITPHISSNLIGFLCGLIFVMGIALILYEIHLRIPLLKFLFSGKPPVKRESRATIG.

Helical transmembrane passes span 17–37 (AWLM…THSW), 54–74 (FIHA…SYML), 91–111 (VGIP…ILLQ), 140–160 (LWFL…FTWF), 173–193 (AISL…YAAI), 212–232 (FIVM…LAFI), 240–260 (FTTP…AYLL), 274–294 (TESV…FSLG), 311–331 (ASLF…AYIT), and 338–358 (LIGF…LYEI).

Belongs to the acyltransferase 3 family. OpgC subfamily.

It localises to the cell membrane. It participates in glycan metabolism; osmoregulated periplasmic glucan (OPG) biosynthesis. Functionally, necessary for the succinyl substitution of periplasmic glucans. Could catalyze the transfer of succinyl residues from the cytoplasmic side of the membrane to the nascent glucan backbones on the periplasmic side of the membrane. This is Glucans biosynthesis protein C from Salmonella typhimurium (strain LT2 / SGSC1412 / ATCC 700720).